We begin with the raw amino-acid sequence, 417 residues long: MTLHTLDELLADGVQGRYVLVRSDLNVPLSGAEDTNLTVTDDGRIRASLPVIEKLAAAGARVLVLAHLGRPKGAPEAKYSLRPAADRLAELASVPVSLAADTSGESAQKAAAELADGQVLVLENVRFDPRETSKDDAERAAFAAELAELAASGADKEAAYVDDAFGAVHRKHASVFDLALKLPSFHGDLVRTELDVLRKLTDSPERPYVVVLGGSKVSDKLAVIENLIGKADSILVGGGMLFTFLAAQGHEVGASLLESDQIDTVKDYLARAEAAGTSFVLPTDVVVASKFAADAAHELVAAQAIESSSFGAAGIGLDIGPETSQAFAEQISAAKTVFWNGPMGVFEFAAFASGTRAVAQALADSAAFSVVGGGDSAAAVRTLGFADNAFGHISTGGGASLEFLEGKELPGLTALDR.

Substrate contacts are provided by residues 24-26 (DLN), arginine 44, 67-70 (HLGR), arginine 126, and arginine 170. ATP contacts are provided by residues lysine 220, glycine 316, glutamate 347, and 373-376 (GGDS).

This sequence belongs to the phosphoglycerate kinase family. In terms of assembly, monomer.

The protein localises to the cytoplasm. The catalysed reaction is (2R)-3-phosphoglycerate + ATP = (2R)-3-phospho-glyceroyl phosphate + ADP. The protein operates within carbohydrate degradation; glycolysis; pyruvate from D-glyceraldehyde 3-phosphate: step 2/5. This is Phosphoglycerate kinase from Renibacterium salmoninarum (strain ATCC 33209 / DSM 20767 / JCM 11484 / NBRC 15589 / NCIMB 2235).